The sequence spans 191 residues: Shikimate kinase (191 aa).

An ATP-binding site is contributed by 24–29; the sequence is GSGKTS. T28 serves as a coordination point for Mg(2+). The substrate site is built by D46, R70, and G92. Residue R130 participates in ATP binding. Residue R149 participates in substrate binding.

Belongs to the shikimate kinase family. In terms of assembly, monomer. The cofactor is Mg(2+).

The protein resides in the cytoplasm. The catalysed reaction is shikimate + ATP = 3-phosphoshikimate + ADP + H(+). The protein operates within metabolic intermediate biosynthesis; chorismate biosynthesis; chorismate from D-erythrose 4-phosphate and phosphoenolpyruvate: step 5/7. In terms of biological role, catalyzes the specific phosphorylation of the 3-hydroxyl group of shikimic acid using ATP as a cosubstrate. This chain is Shikimate kinase, found in Parasynechococcus marenigrum (strain WH8102).